Consider the following 357-residue polypeptide: UPF0283 membrane protein HS_0596 (357 aa).

3 consecutive transmembrane segments (helical) span residues 67–87 (LMAT…QWLV), 96–116 (IAFV…GAII), and 213–233 (AVES…MFFI).

It belongs to the UPF0283 family.

The protein resides in the cell inner membrane. The chain is UPF0283 membrane protein HS_0596 from Histophilus somni (strain 129Pt) (Haemophilus somnus).